Consider the following 277-residue polypeptide: MVVVTHISTSFHQISPSFFHLRLRNPSTTSSSRPKLDGGFALSIRAYIEKPNSFSTFANKVIGSLPVIGLLARIISDEGGVGRDLVDFAEFRKRVGNKCTPDDSRAFYEFQQRRGKAGEPLYVLLCCWVAAVGAGLLKSEEILEGVTRVSISNDLEFEEQNFIALMTEARQRRAKLNIDAPTIPMELRVEKALEGIYACCFRRGLIEEEDEKLLKVMLIAVFPSVEKSEIERIIKEKATRVEEGGEEENVMAKRLPKEAIQMQMKDLEFLQQQNIES.

The transit peptide at 1–45 (MVVVTHISTSFHQISPSFFHLRLRNPSTTSSSRPKLDGGFALSIR) directs the protein to the chloroplast.

In terms of assembly, interacts with PYG7.

Its subcellular location is the plastid. The protein localises to the chloroplast. It localises to the chloroplast thylakoid membrane. Its function is as follows. Nuclear genome-encoded factor required for the accumulation of photosystem I (PSI). Functions as a PSI biogenesis factor. Cooperates with PYG7 to promote the stable assembly of PSI in the thylakoid membrane. May target primarily the PsaC subunit. Does not seem to be required for the expression of chloroplast genes encoding PSI subunits. This Arabidopsis thaliana (Mouse-ear cress) protein is Photosystem I assembly factor PSA3, chloroplastic.